A 307-amino-acid polypeptide reads, in one-letter code: Leucine-rich repeat-containing protein 59 (307 aa).

Met-1 carries the N-acetylmethionine modification. An N-acetylthreonine; in Leucine-rich repeat-containing protein 59, N-terminally processed modification is found at Thr-2. The Cytoplasmic segment spans residues 2-244; that stretch reads TKAGSKGGNL…KPPPRKHTRS (243 aa). LRR repeat units lie at residues 10-31, 40-62, 63-84, 86-107, and 109-128; these read NLRD…NEVP, KATV…CGLT, HLVK…FGRL, NLQH…FAQL, and NLKW…AKVA. A phosphoserine mark is found at Ser-23 and Ser-25. Position 73 is an N6-succinyllysine (Lys-73). Lys-135 carries the N6-acetyllysine modification. Residues 148 to 216 adopt a coiled-coil conformation; the sequence is MKAVQADQER…KASKREQEKK (69 aa). The interval 150–241 is disordered; it reads AVQADQERER…RPRKPPPRKH (92 aa). Basic and acidic residues predominate over residues 154–221; it reads DQERERQRRL…EQEKKPKKEA (68 aa). The segment covering 229–241 has biased composition (basic residues); the sequence is SGSRPRKPPPRKH. The chain crosses the membrane as a helical span at residues 245–265; it reads WAVLKVLLLLLLLCVAGGLVV. The Lumenal portion of the chain corresponds to 266-307; it reads CRVTGLHQQPLCTSVNTIYDNAVQGLRHHEILQWVLQTDSQQ.

In terms of assembly, can form homodimers. Interacts with SGO1. Interacts with FGF1.

It localises to the microsome membrane. The protein localises to the endoplasmic reticulum membrane. Its subcellular location is the nucleus envelope. Required for nuclear import of FGF1, but not that of FGF2. Might regulate nuclear import of exogenous FGF1 by facilitating interaction with the nuclear import machinery and by transporting cytosolic FGF1 to, and possibly through, the nuclear pores. The polypeptide is Leucine-rich repeat-containing protein 59 (Lrrc59) (Mus musculus (Mouse)).